The primary structure comprises 663 residues: DNA topoisomerase 4 subunit B (663 aa).

Residues Tyr-7, Asn-47, Asp-74, 114 to 120 (GLHGVGA), and Lys-341 contribute to the ATP site. Residues 386-418 (REAARKAREDARSGKKNKRKDTLLSGKLTPAQS) are disordered. The segment covering 387–398 (EAARKAREDARS) has biased composition (basic and acidic residues). The 115-residue stretch at 424 to 538 (NELYLVEGDS…AGRVFIALPP (115 aa)) folds into the Toprim domain. Residues Glu-430, Asp-503, and Asp-505 each coordinate Mg(2+).

It belongs to the type II topoisomerase family. ParE type 2 subfamily. As to quaternary structure, heterotetramer composed of ParC and ParE. Mg(2+) serves as cofactor. Mn(2+) is required as a cofactor. The cofactor is Ca(2+).

The enzyme catalyses ATP-dependent breakage, passage and rejoining of double-stranded DNA.. Functionally, topoisomerase IV is essential for chromosome segregation. It relaxes supercoiled DNA. Performs the decatenation events required during the replication of a circular DNA molecule. In Staphylococcus aureus (strain MRSA252), this protein is DNA topoisomerase 4 subunit B.